Reading from the N-terminus, the 266-residue chain is Thymidylate synthase (266 aa).

DUMP is bound at residue Arg-24. His-54 provides a ligand contact to (6R)-5,10-methylene-5,6,7,8-tetrahydrofolate. 129–130 (RR) provides a ligand contact to dUMP. Cys-149 acts as the Nucleophile in catalysis. Residues 169–172 (RSAD), Asn-180, and 210–212 (HIY) each bind dUMP. Residue Asp-172 participates in (6R)-5,10-methylene-5,6,7,8-tetrahydrofolate binding. Ala-265 lines the (6R)-5,10-methylene-5,6,7,8-tetrahydrofolate pocket.

It belongs to the thymidylate synthase family. Bacterial-type ThyA subfamily. In terms of assembly, homodimer.

The protein resides in the cytoplasm. It carries out the reaction dUMP + (6R)-5,10-methylene-5,6,7,8-tetrahydrofolate = 7,8-dihydrofolate + dTMP. Its pathway is pyrimidine metabolism; dTTP biosynthesis. Functionally, catalyzes the reductive methylation of 2'-deoxyuridine-5'-monophosphate (dUMP) to 2'-deoxythymidine-5'-monophosphate (dTMP) while utilizing 5,10-methylenetetrahydrofolate (mTHF) as the methyl donor and reductant in the reaction, yielding dihydrofolate (DHF) as a by-product. This enzymatic reaction provides an intracellular de novo source of dTMP, an essential precursor for DNA biosynthesis. This Mycolicibacterium smegmatis (strain ATCC 700084 / mc(2)155) (Mycobacterium smegmatis) protein is Thymidylate synthase.